The primary structure comprises 65 residues: MKILYLLFAFLFLAFLSEPGNAYKQCHKKGGHCFPKEKICIPPSSDFGKMDCRWRWKCCKKGSGK.

An N-terminal signal peptide occupies residues 1-22; sequence MKILYLLFAFLFLAFLSEPGNA. 3 disulfide bridges follow: C26/C58, C33/C52, and C40/C59.

It belongs to the crotamine-myotoxin family. Monomer. As to expression, expressed by the venom gland.

It is found in the secreted. Its function is as follows. Cationic peptide that possesses multiple functions. It acts as a cell-penetrating peptide (CPP), and as a potent voltage-gated potassium channel (Kv) inhibitor. It exhibits antimicrobial activities, hind limb paralysis, and severe muscle necrosis by a non-enzymatic mechanism. The sequence is that of Crotamine CRO1 (CRO1) from Crotalus durissus terrificus (South American rattlesnake).